The following is a 187-amino-acid chain: UPF0301 protein YE3428 (187 aa).

Belongs to the UPF0301 (AlgH) family.

In Yersinia enterocolitica serotype O:8 / biotype 1B (strain NCTC 13174 / 8081), this protein is UPF0301 protein YE3428.